The chain runs to 130 residues: Small ribosomal subunit protein uS9 (130 aa).

The protein belongs to the universal ribosomal protein uS9 family.

The protein is Small ribosomal subunit protein uS9 of Xylella fastidiosa (strain 9a5c).